The following is a 464-amino-acid chain: Fumarate hydratase class II (464 aa).

Substrate-binding positions include 100-102 (SGT), 131-134 (HPND), 141-143 (SSN), and T189. H190 functions as the Proton donor/acceptor in the catalytic mechanism. S320 is a catalytic residue. Residues S321 and 326-328 (KVN) contribute to the substrate site.

It belongs to the class-II fumarase/aspartase family. Fumarase subfamily. In terms of assembly, homotetramer.

It localises to the cytoplasm. The enzyme catalyses (S)-malate = fumarate + H2O. It functions in the pathway carbohydrate metabolism; tricarboxylic acid cycle; (S)-malate from fumarate: step 1/1. Functionally, involved in the TCA cycle. Catalyzes the stereospecific interconversion of fumarate to L-malate. The polypeptide is Fumarate hydratase class II (Deinococcus radiodurans (strain ATCC 13939 / DSM 20539 / JCM 16871 / CCUG 27074 / LMG 4051 / NBRC 15346 / NCIMB 9279 / VKM B-1422 / R1)).